A 494-amino-acid polypeptide reads, in one-letter code: UDP-N-acetylmuramate--L-alanine ligase (494 aa).

Residue 140-146 coordinates ATP; the sequence is GTHGKTT.

This sequence belongs to the MurCDEF family.

The protein resides in the cytoplasm. It catalyses the reaction UDP-N-acetyl-alpha-D-muramate + L-alanine + ATP = UDP-N-acetyl-alpha-D-muramoyl-L-alanine + ADP + phosphate + H(+). Its pathway is cell wall biogenesis; peptidoglycan biosynthesis. Its function is as follows. Cell wall formation. The protein is UDP-N-acetylmuramate--L-alanine ligase of Trichormus variabilis (strain ATCC 29413 / PCC 7937) (Anabaena variabilis).